Consider the following 1252-residue polypeptide: Protein ITPRID2 (1252 aa).

Residues 28–70 (CRSSWQASETEDLSTETTTQDEDEDDEEDLPGTKLPAPAGRGN) form a disordered region. The span at 36 to 57 (ETEDLSTETTTQDEDEDDEEDL) shows a compositional bias: acidic residues. A Phosphothreonine modification is found at T85. S90, S109, S207, S268, and S328 each carry phosphoserine. 3 disordered regions span residues 306-483 (DKTE…HVPA), 552-575 (HVTP…APLQ), and 595-636 (FPQC…GELP). Positions 357-372 (TVTEEVSGSSSTVTDS) are enriched in low complexity. 2 stretches are compositionally biased toward basic and acidic residues: residues 395-407 (SREA…DPLR) and 415-428 (DLGH…HCEL). Positions 429–441 (ESSSELKSAQASS) are enriched in low complexity. Phosphoserine is present on S465. S643, S667, S736, S738, S745, S758, and S766 each carry phosphoserine. A Glycyl lysine isopeptide (Lys-Gly) (interchain with G-Cter in SUMO2) cross-link involves residue K807. 2 positions are modified to phosphoserine: S866 and S898. Residues 955–1031 (QELQVVRRSL…LLGLDEQLRA (77 aa)) are a coiled coil. S1036, S1051, S1056, S1059, and S1114 each carry phosphoserine. Disordered regions lie at residues 1095 to 1131 (GESS…GSKP) and 1147 to 1180 (ALTP…ASPV). Over residues 1103 to 1117 (SQATSESSSVCSSPS) the composition is skewed to low complexity. Residue T1149 is modified to Phosphothreonine. Residues 1151–1161 (TAPSRTGSVQT) show a composition bias toward polar residues. Residue S1154 is modified to Phosphoserine. The residue at position 1161 (T1161) is a Phosphothreonine.

The protein resides in the cytoplasm. This is Protein ITPRID2 (Itprid2) from Mus musculus (Mouse).